Here is a 142-residue protein sequence, read N- to C-terminus: MTTFTAKNETVQRDWYLVDAEGKTLGRLATELARRLLGKTKPVYTPHVDTGDYLVVINAEKVVVTGKKLTDKYYHRFTGYVGNLKSESLGQALQRHPERVLEIAVKGMLPKGPLGRAMYRKLKVYTGSKHPHTAQQPQVLDI.

It belongs to the universal ribosomal protein uL13 family. Part of the 50S ribosomal subunit.

This protein is one of the early assembly proteins of the 50S ribosomal subunit, although it is not seen to bind rRNA by itself. It is important during the early stages of 50S assembly. The chain is Large ribosomal subunit protein uL13 from Xylella fastidiosa (strain M23).